The primary structure comprises 149 residues: Flagellar assembly factor FliW (149 aa).

The protein belongs to the FliW family. Interacts with translational regulator CsrA and flagellin(s).

It localises to the cytoplasm. Its function is as follows. Acts as an anti-CsrA protein, binds CsrA and prevents it from repressing translation of its target genes, one of which is flagellin. Binds to flagellin and participates in the assembly of the flagellum. This is Flagellar assembly factor FliW from Thermotoga petrophila (strain ATCC BAA-488 / DSM 13995 / JCM 10881 / RKU-1).